A 695-amino-acid chain; its full sequence is MSSFKGNQAQKRRLSVFPKGPLEIPSPTEADWPKDDEKDFVFKDLDQELDSLPQPYRMINKLVDHLFNRSWEIIEERDSLREVEKNWIVPAIYHPVAEIQLDKMPGGMAVSHDYLFIGGLKGFSIYNLHNCKRIYVLEKFKADVISIWATDLGNDVLIVPIDEMGIVRLFYLCKDSLYHIKAINEVDDSSKQSTCLKMEISQNGDFAAFLFQGAGDVWLEVYKLPKEIWLKEMEHPQSTLNQKKKAKQLQLSTPDSAVTESIETSSGPSVSSNSVQDLNISFKSDLKLSLPVFVMKIKPPKPIAGTTFKSPLEVFAKVEDYVGLGSGQNHFIKDVQWEQHMETFYASYKKHLEGEWEEEPLSMATFHFFYTNSLTTMSMDVKSSSGIACVLGIHWNGRHNLFFYSLNKTQKDKTEYENVWPCAAPIVMSQISSFSSYLALVCEDGVLILWDLAEGFLFGVVALPEGCFCQSIHFLRFFLVHEGQNVYPDYPVKFEVMCVVLCTDASLHLVTASGTQGPTSKVLVGRPVMHMEEAICAVAPVPALPGMVLIFSRSQSVTLMDVAKAEVLCAFSAPTCHPQALPWKPLFAVSPHHPYFLLHGAHPHGQTTSTEDPKKSTDSVFYFNFEDYLLLKDISKKCTISQMAVNFSQMLPVEKRCEQVFQKSIQMTKTQMKGREQWSRLRKYSIMLQKELLKR.

Residues 1 to 35 are disordered; that stretch reads MSSFKGNQAQKRRLSVFPKGPLEIPSPTEADWPKD. Residues 421–460 form a WD repeat; it reads PCAAPIVMSQISSFSSYLALVCEDGVLILWDLAEGFLFGV.

As to expression, testis-specific. Expressed in spermatogonia, spermatocytes and spermatids.

The chain is WD repeat-containing protein 93 (Wdr93) from Mus musculus (Mouse).